Consider the following 115-residue polypeptide: Large ribosomal subunit protein bL19 (115 aa).

It belongs to the bacterial ribosomal protein bL19 family.

Its function is as follows. This protein is located at the 30S-50S ribosomal subunit interface and may play a role in the structure and function of the aminoacyl-tRNA binding site. The chain is Large ribosomal subunit protein bL19 from Tolumonas auensis (strain DSM 9187 / NBRC 110442 / TA 4).